A 290-amino-acid polypeptide reads, in one-letter code: Pyridoxal kinase PdxY (290 aa).

Substrate-binding positions include Ser12 and 47-48 (TQ). Residues Asp114, Glu151, Lys184, and 211 to 214 (RPLL) each bind ATP. Asp225 serves as a coordination point for substrate.

Belongs to the pyridoxine kinase family. PdxY subfamily. As to quaternary structure, homodimer. Requires Mg(2+) as cofactor.

The catalysed reaction is pyridoxal + ATP = pyridoxal 5'-phosphate + ADP + H(+). It functions in the pathway cofactor metabolism; pyridoxal 5'-phosphate salvage; pyridoxal 5'-phosphate from pyridoxal: step 1/1. In terms of biological role, pyridoxal kinase involved in the salvage pathway of pyridoxal 5'-phosphate (PLP). Catalyzes the phosphorylation of pyridoxal to PLP. In Pseudomonas putida (strain ATCC 700007 / DSM 6899 / JCM 31910 / BCRC 17059 / LMG 24140 / F1), this protein is Pyridoxal kinase PdxY.